Reading from the N-terminus, the 641-residue chain is Calpain-6 (641 aa).

Residues 26–343 (LFCDPTFLPE…FHKLNVCRNV (318 aa)) form the Calpain catalytic domain. The tract at residues 344-495 (NNPVFGRKEL…IFSEVPVQLR (152 aa)) is domain III. The C2 domain maps to 498–621 (TLDMPKMSCW…YLRKKGGPTA (124 aa)).

It belongs to the peptidase C2 family. Interacts (via domain III) with microtubules. Interacts (via domain II) with ARHGEF2 (via the N-terminal zinc finger).

Its subcellular location is the cytoplasm. It is found in the perinuclear region. The protein resides in the cytoskeleton. The protein localises to the spindle. Its function is as follows. Microtubule-stabilizing protein that may be involved in the regulation of microtubule dynamics and cytoskeletal organization. May act as a regulator of RAC1 activity through interaction with ARHGEF2 to control lamellipodial formation and cell mobility. Does not seem to have protease activity as it has lost the active site residues. This Mus musculus (Mouse) protein is Calpain-6 (Capn6).